The sequence spans 357 residues: DNA replication and repair protein RecF (357 aa).

30-37 (GANGSGKT) contacts ATP.

It belongs to the RecF family.

Its subcellular location is the cytoplasm. Functionally, the RecF protein is involved in DNA metabolism; it is required for DNA replication and normal SOS inducibility. RecF binds preferentially to single-stranded, linear DNA. It also seems to bind ATP. In Klebsiella pneumoniae subsp. pneumoniae (strain ATCC 700721 / MGH 78578), this protein is DNA replication and repair protein RecF.